A 520-amino-acid polypeptide reads, in one-letter code: GMP synthase [glutamine-hydrolyzing] (520 aa).

Residues 9 to 202 (SVLIVDFGSQ…IHNIAGIKGD (194 aa)) enclose the Glutamine amidotransferase type-1 domain. Residue Cys86 is the Nucleophile of the active site. Residues His176 and Glu178 contribute to the active site. One can recognise a GMPS ATP-PPase domain in the interval 203 to 395 (WSMSAYRQKA…LGLPDSFIGR (193 aa)). Residue 230 to 236 (SGGVDSS) coordinates ATP.

In terms of assembly, homodimer.

It catalyses the reaction XMP + L-glutamine + ATP + H2O = GMP + L-glutamate + AMP + diphosphate + 2 H(+). It participates in purine metabolism; GMP biosynthesis; GMP from XMP (L-Gln route): step 1/1. Catalyzes the synthesis of GMP from XMP. The chain is GMP synthase [glutamine-hydrolyzing] from Rhizobium etli (strain CIAT 652).